The sequence spans 126 residues: Glycine cleavage system H protein (126 aa).

In terms of domain architecture, Lipoyl-binding spans 23 to 104; sequence TLTVGITDHA…PYESWLFKIK (82 aa). Lys-64 carries the N6-lipoyllysine modification.

It belongs to the GcvH family. The glycine cleavage system is composed of four proteins: P, T, L and H. Requires (R)-lipoate as cofactor.

In terms of biological role, the glycine cleavage system catalyzes the degradation of glycine. The H protein shuttles the methylamine group of glycine from the P protein to the T protein. The protein is Glycine cleavage system H protein of Paraburkholderia xenovorans (strain LB400).